Here is a 1845-residue protein sequence, read N- to C-terminus: Collagen alpha-1(XXVII) chain (1845 aa).

Positions 1–39 (MGTGFARGARGTAASGPGGGFLFAWILVSFTCHLASTQG) are cleaved as a signal peptide. A propeptide spans 40–609 (APEDVDVLQR…LGPTPFPMLM (570 aa)) (N-terminal propeptide). The 166-residue stretch at 72–237 (PSGFIFTQRA…NYCAHLRERC (166 aa)) folds into the Laminin G-like domain. A glycan (N-linked (GlcNAc...) asparagine) is linked at Asn-272. Disordered stretches follow at residues 299 to 478 (TKPL…VPKT), 502 to 572 (PPLG…RPST), 608 to 774 (LMGP…MGRP), and 827 to 1608 (LMGG…HPIQ). Over residues 312–323 (HSSSQTPLSPAK) the composition is skewed to polar residues. Composition is skewed to low complexity over residues 327–343 (RKTP…NSTR) and 356–372 (TTTS…SVSP). An N-linked (GlcNAc...) asparagine glycan is attached at Asn-340. Positions 429–439 (PRPPVPSPQPL) are enriched in pro residues. Positions 444-454 (GLSKKFTNPTV) are enriched in polar residues. A compositionally biased stretch (basic and acidic residues) spans 554 to 564 (SARDASPRDLT). 11 consecutive Collagen-like domains span residues 610 to 664 (GPPG…GDPG), 673 to 732 (GAKG…PGPV), 742 to 801 (GYIG…PGPP), 817 to 876 (GYPG…PGPL), 877 to 936 (GKAG…EGPM), 937 to 996 (GPPG…VGEK), 997 to 1038 (GDRG…PGSR), 1039 to 1096 (GLPG…GAKG), 1117 to 1176 (GSQG…PGLE), 1177 to 1236 (GDHG…QGEK), and 1240 to 1299 (GAKG…NGHK). A triple-helical region spans residues 610-1603 (GPPGSKGDCG…RGRPGPPGPP (994 aa)). The span at 639 to 654 (RGPPGPYGNPGPPGPP) shows a compositional bias: pro residues. 2 stretches are compositionally biased toward low complexity: residues 677–690 (NMGL…PGPL) and 699–719 (PGAA…SPGA). The span at 865 to 874 (GLPGGRGKPG) shows a compositional bias: gly residues. Residues 896–909 (FPGDIGPPGDNGPE) are compositionally biased toward low complexity. Residues 1018–1027 (GTPGGIGNPG) show a composition bias toward gly residues. Low complexity-rich tracts occupy residues 1074-1086 (RGRP…QGAA), 1112-1122 (LPGEPGSQGPQ), and 1152-1167 (KGDL…QGLI). Basic and acidic residues-rich tracts occupy residues 1187–1212 (LKGD…KGED) and 1226–1238 (REGK…EKGQ). Composition is skewed to basic and acidic residues over residues 1311 to 1323 (KGEK…DGKT) and 1335 to 1345 (PVGDRGDRGEP). The Collagen-like 12 domain occupies 1325–1384 (GPPGPPGDRGPVGDRGDRGEPGDPGYPGQEGVQGLRGEPGQQGQPGHPGPRGRPGPKGSK). Low complexity-rich tracts occupy residues 1360-1369 (RGEPGQQGQP), 1395-1422 (KAGP…RQGP), and 1438-1465 (PGYQ…PGVA). Collagen-like domains are found at residues 1424-1483 (GTAG…SGLP), 1484-1543 (GQLG…KGIQ), and 1544-1603 (GPRG…PGPP). A compositionally biased stretch (low complexity) spans 1557–1572 (IIGPPGMLGPSGLPGP). Over residues 1588–1605 (RGPPGPRGRPGPPGPPWH) the composition is skewed to pro residues. The propeptide at 1607–1845 (IQFQQDDLGA…RLEVGPACFL (239 aa)) is C-terminal propeptide. One can recognise a Fibrillar collagen NC1 domain in the interval 1645–1845 (GEIFKTLHYL…RLEVGPACFL (201 aa)). 3 disulfide bridges follow: Cys-1675–Cys-1707, Cys-1716–Cys-1843, and Cys-1752–Cys-1796. The Ca(2+) site is built by Asp-1693, Asn-1695, Cys-1698, and Asp-1701. Residue Asn-1754 is glycosylated (N-linked (GlcNAc...) asparagine).

The protein belongs to the fibrillar collagen family. Highly expressed in cartilage, eye and ear.

The protein resides in the secreted. It is found in the extracellular space. Its subcellular location is the extracellular matrix. Plays a role during the calcification of cartilage and the transition of cartilage to bone. The polypeptide is Collagen alpha-1(XXVII) chain (Col27a1) (Mus musculus (Mouse)).